Reading from the N-terminus, the 350-residue chain is Succinylglutamate desuccinylase (350 aa).

Residues His-71, Glu-74, and His-169 each contribute to the Zn(2+) site. Glu-233 is a catalytic residue.

It belongs to the AspA/AstE family. Succinylglutamate desuccinylase subfamily. Zn(2+) serves as cofactor.

The catalysed reaction is N-succinyl-L-glutamate + H2O = L-glutamate + succinate. Its pathway is amino-acid degradation; L-arginine degradation via AST pathway; L-glutamate and succinate from L-arginine: step 5/5. Its function is as follows. Transforms N(2)-succinylglutamate into succinate and glutamate. This Pseudoalteromonas atlantica (strain T6c / ATCC BAA-1087) protein is Succinylglutamate desuccinylase.